The following is a 61-amino-acid chain: Small ribosomal subunit protein uS14 (61 aa).

Residues Cys24, Cys27, Cys40, and Cys43 each contribute to the Zn(2+) site.

It belongs to the universal ribosomal protein uS14 family. Zinc-binding uS14 subfamily. As to quaternary structure, part of the 30S ribosomal subunit. Contacts proteins S3 and S10. Zn(2+) serves as cofactor.

Its function is as follows. Binds 16S rRNA, required for the assembly of 30S particles and may also be responsible for determining the conformation of the 16S rRNA at the A site. In Geotalea uraniireducens (strain Rf4) (Geobacter uraniireducens), this protein is Small ribosomal subunit protein uS14.